The primary structure comprises 239 residues: Protein GrpE (239 aa).

2 disordered regions span residues 1–50 (MIEN…INTE) and 209–239 (MGHGQQNSQEEVEKDTVEEDIDSEENTSEDV). Positions 16–30 (VLNQDNAPEDNSSAA) are enriched in polar residues. Acidic residues predominate over residues 218–239 (EEVEKDTVEEDIDSEENTSEDV).

The protein belongs to the GrpE family. In terms of assembly, homodimer.

Its subcellular location is the cytoplasm. Participates actively in the response to hyperosmotic and heat shock by preventing the aggregation of stress-denatured proteins, in association with DnaK and GrpE. It is the nucleotide exchange factor for DnaK and may function as a thermosensor. Unfolded proteins bind initially to DnaJ; upon interaction with the DnaJ-bound protein, DnaK hydrolyzes its bound ATP, resulting in the formation of a stable complex. GrpE releases ADP from DnaK; ATP binding to DnaK triggers the release of the substrate protein, thus completing the reaction cycle. Several rounds of ATP-dependent interactions between DnaJ, DnaK and GrpE are required for fully efficient folding. The chain is Protein GrpE from Prochlorococcus marinus (strain MIT 9312).